The primary structure comprises 515 residues: Protein aaim-1 (515 aa).

A signal peptide spans 1-16 (MRLLFFFSILYTASLC). 2 N-linked (GlcNAc...) asparagine glycosylation sites follow: Asn46 and Asn127. Residues 248-267 (RRTDPNSKFKPRPTTSQSNG) form a disordered region. Residue Asn447 is glycosylated (N-linked (GlcNAc...) asparagine).

As to expression, expressed in the terminal bulb of the pharynx and the posterior of the intestine (at protein level). Expressed by intestinal cells and secreted into the intestinal lumen (at protein level).

It localises to the secreted. Functionally, plays a role in promoting resistance to bacterial pathogens such as P.aeruginosa by inhibiting bacterial intestinal colonization. Its function is as follows. (Microbial infection) Promotes infection by microsporidian pathogens such as N.parisii in the early larval stages of development. Involved in ensuring the proper orientation and location of the spore proteins of N.parisii during intestinal cell invasion. This is Protein aaim-1 from Caenorhabditis elegans.